The following is a 139-amino-acid chain: MANAASGMAVHDDCKLKFMELKTKRTHRFIIYKIEELQKQVIVEKIGEPGQTHEDLAASLPADECRYAIFDFDFVSSEGVPRSRIFFVAWSPDTARVRSKMIYASSKDRFKRELDGIQVELQATDPTEMDLDVFKSRAN.

Residues 5 to 139 (ASGMAVHDDC…DLDVFKSRAN (135 aa)) form the ADF-H domain. Ser6 bears the Phosphoserine mark.

It belongs to the actin-binding proteins ADF family.

It is found in the cytoplasm. Its subcellular location is the cytoskeleton. Functionally, actin-depolymerizing protein. Severs actin filaments (F-actin) and binds to actin monomers. In Arabidopsis thaliana (Mouse-ear cress), this protein is Actin-depolymerizing factor 3 (ADF3).